We begin with the raw amino-acid sequence, 438 residues long: MDMLTWAALSADEQKTALQRSPLIGDSGLEQSVRAIVDAVASRGDAAIKEFNQKFDGARLANISSANSDNLRLSEHEIEAASARVSPELKAAIAQAMANIDVFHSAQQFRPIDIETQAGVRCELRSEPIEKVGLYIPGGSAPLISTVLMLALPATIAGCEQRVLVSPPPINDAIVYAANVCGITEIYQVGGAQAIAALAFGTETIPSVDKIFGPGNRYVTEAKRLVSQDGRCTVSIDMPAGPSEVLVIADSDANAQFIAADLLSQAEHGPDSQVILVTDSLPLAQAVNQALKSQLAALPRQEIAATALKGSRTILVKDMQEAALVSNRYGPEHLIIQTRFPREVLNNIRAAGSVFLGAYTPESVGDYASGTNHVLPTYGYSRAVSSLSLADFSRRFTVQELSAKGLLGLGQAVMTLASNELLDAHKNAVAVRLASLKG.

NAD(+) is bound by residues tyrosine 135, glutamine 193, and asparagine 216. 3 residues coordinate substrate: serine 243, glutamine 265, and histidine 268. Zn(2+) contacts are provided by glutamine 265 and histidine 268. Residues glutamate 332 and histidine 333 each act as proton acceptor in the active site. Substrate is bound by residues histidine 333, aspartate 366, glutamate 420, and histidine 425. Aspartate 366 is a Zn(2+) binding site. Residue histidine 425 coordinates Zn(2+).

This sequence belongs to the histidinol dehydrogenase family. It depends on Zn(2+) as a cofactor.

It catalyses the reaction L-histidinol + 2 NAD(+) + H2O = L-histidine + 2 NADH + 3 H(+). It participates in amino-acid biosynthesis; L-histidine biosynthesis; L-histidine from 5-phospho-alpha-D-ribose 1-diphosphate: step 9/9. Its function is as follows. Catalyzes the sequential NAD-dependent oxidations of L-histidinol to L-histidinaldehyde and then to L-histidine. The protein is Histidinol dehydrogenase of Shewanella oneidensis (strain ATCC 700550 / JCM 31522 / CIP 106686 / LMG 19005 / NCIMB 14063 / MR-1).